We begin with the raw amino-acid sequence, 1543 residues long: Tubby-related protein 4 (1543 aa).

WD repeat units lie at residues 6-72 (EHGP…STPQ), 73-115 (RINF…YEGR), 116-158 (WSVE…SGQR), 159-237 (HWSS…SDDY), 238-276 (APPQ…YDDL), 277-334 (SPTV…GEHI), and 335-372 (FTLD…RVEH). Residues 364–414 (ALYVVRVEHRVSSLQLLCQQAIASTLREDKDVSKLTLPPRLCSYLSTAFIP) enclose the SOCS box domain. Disordered stretches follow at residues 530–577 (SPKI…SVGS) and 829–850 (TKIN…TAAP). Ser577 is subject to Phosphoserine. Asymmetric dimethylarginine occurs at positions 945 and 950. Disordered stretches follow at residues 1004 to 1058 (SPRA…HTAS), 1326 to 1355 (VPQR…AITE), and 1367 to 1453 (DFNS…ASEK). The span at 1036-1050 (TCSQCSGTGPSSQPG) shows a compositional bias: polar residues. A compositionally biased stretch (basic and acidic residues) spans 1329-1347 (RTEKFGKKNRKRLDSRAEE). Residues Ser1343 and Ser1374 each carry the phosphoserine modification. Residues 1443 to 1453 (EEAKCRRASEK) are compositionally biased toward basic and acidic residues. The tract at residues 1466–1543 (VMANKQPLWN…ALANVTQRLK (78 aa)) is TUB.

The protein belongs to the TUB family. As to expression, expressed mainly in the brain, skeletal muscle, testis and kidney.

Its subcellular location is the cytoplasm. Its pathway is protein modification; protein ubiquitination. Functionally, may be a substrate-recognition component of a SCF-like ECS (Elongin-Cullin-SOCS-box protein) E3 ubiquitin ligase complex which mediates the ubiquitination and subsequent proteasomal degradation of target proteins. The polypeptide is Tubby-related protein 4 (TULP4) (Homo sapiens (Human)).